Reading from the N-terminus, the 400-residue chain is Argininosuccinate synthase (400 aa).

ATP-binding positions include alanine 10–serine 18 and alanine 38. Residue tyrosine 89 coordinates L-citrulline. Glycine 119 contributes to the ATP binding site. Residues threonine 121, asparagine 125, and aspartate 126 each contribute to the L-aspartate site. Asparagine 125 lines the L-citrulline pocket. Positions 129, 177, 186, 262, and 274 each coordinate L-citrulline.

This sequence belongs to the argininosuccinate synthase family. Type 1 subfamily. As to quaternary structure, homotetramer.

It is found in the cytoplasm. It catalyses the reaction L-citrulline + L-aspartate + ATP = 2-(N(omega)-L-arginino)succinate + AMP + diphosphate + H(+). It participates in amino-acid biosynthesis; L-arginine biosynthesis; L-arginine from L-ornithine and carbamoyl phosphate: step 2/3. The polypeptide is Argininosuccinate synthase (Prochlorococcus marinus (strain NATL1A)).